Here is a 442-residue protein sequence, read N- to C-terminus: Decapping and exoribonuclease protein 1 (442 aa).

Residues 31 to 40 (QSKLCKEKTT) are compositionally biased toward basic and acidic residues. The disordered stretch occupies residues 31–56 (QSKLCKEKTTSDSSSSRKPSQQRDNY). Over residues 41–53 (SDSSSSRKPSQQR) the composition is skewed to low complexity. Residue R101 participates in substrate binding. E255 contributes to the a divalent metal cation binding site. Substrate is bound at residue E293. Positions 295, 306, and 307 each coordinate a divalent metal cation. 2 residues coordinate substrate: K308 and Q330.

Belongs to the DXO/Dom3Z family. It depends on a divalent metal cation as a cofactor.

It is found in the cytoplasm. It catalyses the reaction a 5'-end NAD(+)-phospho-ribonucleoside in mRNA + H2O = a 5'-end phospho-ribonucleoside in mRNA + NAD(+) + H(+). It carries out the reaction a 5'-end (N(7)-methyl 5'-triphosphoguanosine)-ribonucleoside-ribonucleotide in mRNA + H2O = a (N(7)-methyl 5'-triphosphoguanosine)-nucleoside + a 5'-end phospho-ribonucleoside in mRNA + H(+). In terms of biological role, decapping enzyme for NAD-capped RNAs: specifically hydrolyzes the nicotinamide adenine dinucleotide (NAD) cap from a subset of RNAs by removing the entire NAD moiety from the 5'-end of an NAD-capped RNA. The NAD-cap is present at the 5'-end of some RNAs and snoRNAs. In contrast to the canonical 5'-end N7 methylguanosine (m7G) cap, the NAD cap promotes mRNA decay. Also acts as a non-canonical decapping enzyme that removes the entire cap structure of m7G capped or incompletely capped RNAs. Has decapping activity toward incomplete 5'-end m7G cap mRNAs such as unmethylated 5'-end-capped RNA (cap0), while it has no activity toward 2'-O-ribose methylated m7G cap (cap1). Also has 5'-3' exonuclease activity. The chain is Decapping and exoribonuclease protein 1 (DXO1) from Saccharomyces cerevisiae (strain ATCC 204508 / S288c) (Baker's yeast).